The chain runs to 136 residues: MLSPKRTRFRKQHRGRMKGKSCRGNRICFGRYALQALEPAWITARQIEAGRRAITRYARRGGKIWVRIFPDKPVTLRPTETRMGSGKGSPEYWVAVVKPGRILYEMGGVSETVARAAISIAASKMPIRSQFIRLEI.

The segment at 1 to 20 (MLSPKRTRFRKQHRGRMKGK) is disordered.

The protein belongs to the universal ribosomal protein uL16 family. Part of the 50S ribosomal subunit.

The protein localises to the plastid. It is found in the chloroplast. The protein is Large ribosomal subunit protein uL16c of Agrostis stolonifera (Creeping bentgrass).